A 59-amino-acid polypeptide reads, in one-letter code: Large ribosomal subunit protein uL30 (59 aa).

Belongs to the universal ribosomal protein uL30 family. Part of the 50S ribosomal subunit.

This is Large ribosomal subunit protein uL30 from Sodalis glossinidius (strain morsitans).